The chain runs to 552 residues: Carotenoid cleavage dioxygenase 8 homolog A, chloroplastic (552 aa).

The transit peptide at 1-43 directs the protein to the chloroplast; sequence MATSLTLIATPCTAPRSSSSFALAPRLPPRCSNATAARRRAVR. Residues 32–73 form a disordered region; sequence SNATAARRRAVRATTLQSDQEPAGSGDSGATTTKLSASTSVR. Over residues 59 to 72 the composition is skewed to polar residues; that stretch reads SGATTTKLSASTSV. The Fe cation site is built by histidine 239, histidine 289, histidine 356, and histidine 543.

This sequence belongs to the carotenoid oxygenase family. Fe(2+) is required as a cofactor. Highly expressed in panicles, inflorescences and parenchyma cells of the root stele, and at lower levels in shoot apex, leaf buds and xylem parenchyma cells of the stem.

It localises to the plastid. The protein resides in the chloroplast. In terms of biological role, may be involved in strigolactones biosynthesis. This Oryza sativa subsp. japonica (Rice) protein is Carotenoid cleavage dioxygenase 8 homolog A, chloroplastic (CCD8A).